The chain runs to 317 residues: Aspartate carbamoyltransferase catalytic subunit (317 aa).

The carbamoyl phosphate site is built by R66 and T67. K94 contacts L-aspartate. Carbamoyl phosphate is bound by residues R116, H144, and Q147. Residues R177 and R231 each contribute to the L-aspartate site. Carbamoyl phosphate is bound by residues G272 and P273.

The protein belongs to the aspartate/ornithine carbamoyltransferase superfamily. ATCase family. Heterododecamer (2C3:3R2) of six catalytic PyrB chains organized as two trimers (C3), and six regulatory PyrI chains organized as three dimers (R2).

It catalyses the reaction carbamoyl phosphate + L-aspartate = N-carbamoyl-L-aspartate + phosphate + H(+). The protein operates within pyrimidine metabolism; UMP biosynthesis via de novo pathway; (S)-dihydroorotate from bicarbonate: step 2/3. In terms of biological role, catalyzes the condensation of carbamoyl phosphate and aspartate to form carbamoyl aspartate and inorganic phosphate, the committed step in the de novo pyrimidine nucleotide biosynthesis pathway. This chain is Aspartate carbamoyltransferase catalytic subunit, found in Rhodopseudomonas palustris (strain ATCC BAA-98 / CGA009).